Here is a 312-residue protein sequence, read N- to C-terminus: DNA-directed RNA polymerase subunit alpha (312 aa).

The tract at residues 1 to 226 (MIEFEKPTIT…EHLGLFTDLT (226 aa)) is alpha N-terminal domain (alpha-NTD). The segment at 242–312 (SDDRMLDRTI…DLGLGLKKDK (71 aa)) is alpha C-terminal domain (alpha-CTD).

The protein belongs to the RNA polymerase alpha chain family. Homodimer. The RNAP catalytic core consists of 2 alpha, 1 beta, 1 beta' and 1 omega subunit. When a sigma factor is associated with the core the holoenzyme is formed, which can initiate transcription.

The catalysed reaction is RNA(n) + a ribonucleoside 5'-triphosphate = RNA(n+1) + diphosphate. In terms of biological role, DNA-dependent RNA polymerase catalyzes the transcription of DNA into RNA using the four ribonucleoside triphosphates as substrates. This chain is DNA-directed RNA polymerase subunit alpha, found in Streptococcus suis (strain 98HAH33).